We begin with the raw amino-acid sequence, 124 residues long: Ribonuclease pancreatic (124 aa).

A compositionally biased stretch (basic and acidic residues) spans 1 to 13 (KESAAAKFERQHM). A disordered region spans residues 1–25 (KESAAAKFERQHMDPSPSSASSSNY). The substrate site is built by lysine 7 and arginine 10. Residue histidine 12 is the Proton acceptor of the active site. 4 disulfide bridges follow: cysteine 26/cysteine 84, cysteine 40/cysteine 95, cysteine 58/cysteine 110, and cysteine 65/cysteine 72. A glycan (N-linked (GlcNAc...) asparagine; partial) is linked at asparagine 34. Substrate contacts are provided by residues 41–45 (KPVNT), lysine 66, and arginine 85. The active-site Proton donor is histidine 119.

It belongs to the pancreatic ribonuclease family. As to quaternary structure, monomer. Interacts with and forms tight 1:1 complexes with RNH1. Dimerization of two such complexes may occur. Interaction with RNH1 inhibits this protein. As to expression, pancreas.

The protein resides in the secreted. It catalyses the reaction an [RNA] containing cytidine + H2O = an [RNA]-3'-cytidine-3'-phosphate + a 5'-hydroxy-ribonucleotide-3'-[RNA].. It carries out the reaction an [RNA] containing uridine + H2O = an [RNA]-3'-uridine-3'-phosphate + a 5'-hydroxy-ribonucleotide-3'-[RNA].. Endonuclease that catalyzes the cleavage of RNA on the 3' side of pyrimidine nucleotides. Acts on single-stranded and double-stranded RNA. The polypeptide is Ribonuclease pancreatic (RNASE1) (Capreolus capreolus (European roe deer)).